Consider the following 282-residue polypeptide: NADPH-dependent 7-cyano-7-deazaguanine reductase (282 aa).

Substrate is bound at residue 88–90 (IES). Residue 90 to 91 (SK) coordinates NADPH. Cys-190 serves as the catalytic Thioimide intermediate. Asp-197 acts as the Proton donor in catalysis. 229-230 (HE) is a binding site for substrate. NADPH is bound at residue 258-259 (RG).

It belongs to the GTP cyclohydrolase I family. QueF type 2 subfamily. As to quaternary structure, homodimer.

It is found in the cytoplasm. The enzyme catalyses 7-aminomethyl-7-carbaguanine + 2 NADP(+) = 7-cyano-7-deazaguanine + 2 NADPH + 3 H(+). It functions in the pathway tRNA modification; tRNA-queuosine biosynthesis. Catalyzes the NADPH-dependent reduction of 7-cyano-7-deazaguanine (preQ0) to 7-aminomethyl-7-deazaguanine (preQ1). This chain is NADPH-dependent 7-cyano-7-deazaguanine reductase, found in Escherichia coli O81 (strain ED1a).